Reading from the N-terminus, the 376-residue chain is DNA replication and repair protein RecF (376 aa).

30-37 (GNNAQGKS) contributes to the ATP binding site.

It belongs to the RecF family.

The protein resides in the cytoplasm. The RecF protein is involved in DNA metabolism; it is required for DNA replication and normal SOS inducibility. RecF binds preferentially to single-stranded, linear DNA. It also seems to bind ATP. This chain is DNA replication and repair protein RecF, found in Nostoc sp. (strain PCC 7120 / SAG 25.82 / UTEX 2576).